The following is a 106-amino-acid chain: Toxin-like structure LSTX-D8 (106 aa).

An N-terminal signal peptide occupies residues 1–20 (MTKVLVVVALLVTLISYSSS). Residues 21–41 (EGIDDLEADELLSLMANEQTR) constitute a propeptide that is removed on maturation. 4 disulfide bridges follow: cysteine 45-cysteine 60, cysteine 52-cysteine 69, cysteine 59-cysteine 85, and cysteine 71-cysteine 83.

This sequence belongs to the neurotoxin 19 (CSTX) family. 02 (D7) subfamily. In terms of tissue distribution, expressed by the venom gland.

The protein resides in the secreted. This Lycosa singoriensis (Wolf spider) protein is Toxin-like structure LSTX-D8.